A 573-amino-acid chain; its full sequence is uncharacterized protein (573 aa).

2 disordered regions span residues 1 to 33 (MLQQGSSSRRSLHGNDFHTLTSPSRRDSLSIPR) and 60 to 101 (LVAN…SRYD). The segment covering 60–70 (LVANRSDNNGN) has biased composition (polar residues). Residue Asn63 is glycosylated (N-linked (GlcNAc...) asparagine). A compositionally biased stretch (low complexity) spans 84-95 (SSSTSSLPSTRN). 10 repeat units span residues 102–103 (NM), 104–105 (NM), 106–107 (NM), 108–109 (NM), 110–111 (NM), 112–113 (NM), 114–115 (NM), 116–117 (NM), 118–119 (NM), and 120–121 (NM). A 10 X 2 AA tandem repeats of N-M region spans residues 102-121 (NMNMNMNMNMNMNMNMNMNM). N-linked (GlcNAc...) asparagine glycosylation is present at Asn123. Disordered stretches follow at residues 150 to 174 (IPEKYSGSRYSLRSSPPTYSNPRVR), 192 to 271 (QFPN…IRSN), 286 to 317 (KSSNSADSVEENSKTKQKRKNPERVVPEPITS), and 357 to 379 (NNRIPVLPPPRSPNRPTLSDKRT). Residues 157 to 170 (SRYSLRSSPPTYSN) are compositionally biased toward polar residues. Low complexity predominate over residues 208 to 225 (LPPSSTFPDSPSSSSLPL). The span at 226–252 (TQTGGPSSADNDSIATGTNNRSPQQTK) shows a compositional bias: polar residues. N-linked (GlcNAc...) asparagine glycosylation occurs at Asn236. N-linked (GlcNAc...) asparagine glycans are attached at residues Asn437 and Asn442. 2 stretches are compositionally biased toward low complexity: residues 441 to 457 (INSSISSPAPSSSSSSS) and 466 to 483 (SISSSPTPAPSSGSSKSK). The interval 441–483 (INSSISSPAPSSSSSSSLVSRGPMQSISSSPTPAPSSGSSKSK) is disordered. 3 N-linked (GlcNAc...) asparagine glycosylation sites follow: Asn498, Asn535, and Asn541.

The protein to yeast AFR1. N-glycosylated.

This is an uncharacterized protein from Saccharomyces cerevisiae (strain ATCC 204508 / S288c) (Baker's yeast).